Reading from the N-terminus, the 396-residue chain is MLESHPAEAATPLLDALQAELADRARLGLLRQRRVLHGMQGVYVEIEGKRLLSFCSNDYLGLASHPSLISAMRDCAVTTGAGTGASHLVSGHQQAHEALEHALQTFMGLPGVLLFTTGYMANLGIITALCGRQDAIFADKLNHASLNDAALLSRAELKRYAHNDLTGLERLLAQSQARRKLVVADAVFSMDGDLAPVPALLSLCERYDAYLMLDDAHGFGVLGAHGRGVLEHFGLDSPRIIYMATLGKAAGAAGAFVAGPTILTEYLMQTARPYIYTTASPAPVAAAAMAGVQLIEHDHARRAHLRALIADFRASCRLQRWQLMASETAIQPVVIGSNEEAVQVSKRLLEHGVLVPAIRPPTVPRGTARLRISLSAAHTHEDVQRLLDILHRLEEA.

R31 serves as a coordination point for substrate. Residue 118–119 (GY) coordinates pyridoxal 5'-phosphate. H143 is a binding site for substrate. Residues S189, H217, and T245 each coordinate pyridoxal 5'-phosphate. K248 is subject to N6-(pyridoxal phosphate)lysine. A substrate-binding site is contributed by T362.

This sequence belongs to the class-II pyridoxal-phosphate-dependent aminotransferase family. BioF subfamily. Homodimer. Pyridoxal 5'-phosphate serves as cofactor.

The enzyme catalyses 6-carboxyhexanoyl-[ACP] + L-alanine + H(+) = (8S)-8-amino-7-oxononanoate + holo-[ACP] + CO2. It functions in the pathway cofactor biosynthesis; biotin biosynthesis. Functionally, catalyzes the decarboxylative condensation of pimeloyl-[acyl-carrier protein] and L-alanine to produce 8-amino-7-oxononanoate (AON), [acyl-carrier protein], and carbon dioxide. The polypeptide is 8-amino-7-oxononanoate synthase (Methylobacillus flagellatus (strain ATCC 51484 / DSM 6875 / VKM B-1610 / KT)).